The chain runs to 733 residues: Catalase-peroxidase (733 aa).

Residues 1-24 (MTDDSTCPVTGGADKQVTGRGQSY) are disordered. Residues 96–219 (WHSAGTYRTL…LAAVQMGLIY (124 aa)) constitute a cross-link (tryptophyl-tyrosyl-methioninium (Trp-Tyr) (with M-245)). H97 functions as the Proton acceptor in the catalytic mechanism. Residues 219–245 (YVNPEGPNGKPDPVAAAKDIRETFARM) constitute a cross-link (tryptophyl-tyrosyl-methioninium (Tyr-Met) (with W-96)). Heme b is bound at residue H260.

It belongs to the peroxidase family. Peroxidase/catalase subfamily. As to quaternary structure, homodimer or homotetramer. It depends on heme b as a cofactor. Post-translationally, formation of the three residue Trp-Tyr-Met cross-link is important for the catalase, but not the peroxidase activity of the enzyme.

The enzyme catalyses H2O2 + AH2 = A + 2 H2O. It carries out the reaction 2 H2O2 = O2 + 2 H2O. Bifunctional enzyme with both catalase and broad-spectrum peroxidase activity. The polypeptide is Catalase-peroxidase (Methanoregula boonei (strain DSM 21154 / JCM 14090 / 6A8)).